The following is a 469-amino-acid chain: Zinc finger and BTB domain-containing protein 8A.1-B (469 aa).

In terms of domain architecture, BTB spans 24–92 (CDCHIIVEGQ…VYSGKLPLSG (69 aa)). C2H2-type zinc fingers lie at residues 315–337 (FKCP…LRCH) and 343–366 (YPCE…QTIH).

The protein localises to the nucleus. In terms of biological role, may be involved in transcriptional regulation. The polypeptide is Zinc finger and BTB domain-containing protein 8A.1-B (zbtb8a.1-b) (Xenopus laevis (African clawed frog)).